The chain runs to 77 residues: MAKVCQVTGKKPMVGNNVSHAKNKTKRRFLPNLQNRRFWVESENRWISLRLTNAGLRVIDKNGIDAVLSDLRTRGEI.

The protein belongs to the bacterial ribosomal protein bL28 family.

The sequence is that of Large ribosomal subunit protein bL28 from Polynucleobacter necessarius subsp. necessarius (strain STIR1).